We begin with the raw amino-acid sequence, 122 residues long: Immunoglobulin lambda variable 4-3 (122 aa).

An N-terminal signal peptide occupies residues 1-19 (MAWVSFYLLPFIFSTGLCA). Residues 20–44 (LPVLTQPPSASALLGASIKLTCTLS) form a framework-1 region. The Ig-like domain occupies 21-122 (PVLTQPPSAS…ESHTIDGQVG (102 aa)). The cysteines at positions 41 and 111 are disulfide-linked. The complementarity-determining-1 stretch occupies residues 45–51 (SEHSTYT). The tract at residues 52 to 68 (IEWYQQRPGRSPQYIMK) is framework-2. Residues 69–75 (VKSDGSH) form a complementarity-determining-2 region. The interval 76 to 111 (SKGDGIPDRFMGSSSGADRYLTFSNLQSDDEAEYHC) is framework-3. A complementarity-determining-3 region spans residues 112-122 (GESHTIDGQVG).

As to quaternary structure, immunoglobulins are composed of two identical heavy chains and two identical light chains; disulfide-linked.

The protein resides in the secreted. The protein localises to the cell membrane. V region of the variable domain of immunoglobulin light chains that participates in the antigen recognition. Immunoglobulins, also known as antibodies, are membrane-bound or secreted glycoproteins produced by B lymphocytes. In the recognition phase of humoral immunity, the membrane-bound immunoglobulins serve as receptors which, upon binding of a specific antigen, trigger the clonal expansion and differentiation of B lymphocytes into immunoglobulins-secreting plasma cells. Secreted immunoglobulins mediate the effector phase of humoral immunity, which results in the elimination of bound antigens. The antigen binding site is formed by the variable domain of one heavy chain, together with that of its associated light chain. Thus, each immunoglobulin has two antigen binding sites with remarkable affinity for a particular antigen. The variable domains are assembled by a process called V-(D)-J rearrangement and can then be subjected to somatic hypermutations which, after exposure to antigen and selection, allow affinity maturation for a particular antigen. This chain is Immunoglobulin lambda variable 4-3, found in Homo sapiens (Human).